Reading from the N-terminus, the 393-residue chain is Cytochrome b (393 aa).

Residues 1–33 are Mitochondrial matrix-facing; the sequence is MTIRNQRFSLLKQPISSTLNQHLVDYPTPSNLS. Residues 34 to 57 traverse the membrane as a helical segment; that stretch reads YWWGFGSLAGICLVIQIVTGVFLA. Topologically, residues 58–80 are mitochondrial intermembrane; the sequence is MHYTPHVDLAFNSVEHIMRDVEG. A helical transmembrane segment spans residues 81 to 108; sequence GWLLRYMHANGASMFFIVVYLHIFRGLY. Residues histidine 88 and histidine 102 each contribute to the heme b site. The Mitochondrial matrix segment spans residues 109–116; the sequence is YASYSSPR. Residues 117–141 traverse the membrane as a helical segment; it reads EFVWCLGVVIFLLMIVTAFIGYVLP. The Mitochondrial intermembrane segment spans residues 142-178; it reads WGQMSFWGATVITSLASAIPVVGDTIVTWLWGGFSVD. The chain crosses the membrane as a helical span at residues 179-210; the sequence is NATLNRFFSLHYLLPFILVGASLLHLAALHQY. Residues histidine 189 and histidine 203 each contribute to the heme b site. Histidine 208 provides a ligand contact to a ubiquinone. Residues 211-229 lie on the Mitochondrial matrix side of the membrane; that stretch reads GSNNPLGVHSEMDKIAFYP. Residues 230–252 traverse the membrane as a helical segment; the sequence is YFYVKDLVGWVAFAIFFSIWIFY. At 253-293 the chain is on the mitochondrial intermembrane side; it reads APNVLGHPDNYIPANPMSTPPHIVPEWYFLPIYAILRSIPD. A helical transmembrane segment spans residues 294–314; it reads KAGGVAAIALVFICLLALPFF. Topologically, residues 315–325 are mitochondrial matrix; sequence KSMYVRSSSFR. The chain crosses the membrane as a helical span at residues 326-346; sequence PIYQGMFWLLLADCLLLGWIG. Over 347-353 the chain is Mitochondrial intermembrane; it reads CQPVEAP. Residues 354–370 traverse the membrane as a helical segment; it reads FVTIGQISSLVFFLFFA. At 371–393 the chain is on the mitochondrial matrix side; it reads ITPILGRVGRGIPNSYTDETDHT.

It belongs to the cytochrome b family. Component of the ubiquinol-cytochrome c oxidoreductase (cytochrome b-c1 complex, complex III, CIII), a multisubunit enzyme composed of 10 subunits. The complex is composed of 3 respiratory subunits cytochrome b (MT-CYB), cytochrome c1 (CYC1-1 or CYC1-2) and Rieske protein (UCR1-1 or UCR1-2), 2 core protein subunits MPPalpha1 (or MPPalpha2) and MPPB, and 5 low-molecular weight protein subunits QCR7-1 (or QCR7-2), UCRQ-1 (or UCRQ-2), QCR9, UCRY and probably QCR6-1 (or QCR6-2). The complex exists as an obligatory dimer and forms supercomplexes (SCs) in the inner mitochondrial membrane with NADH-ubiquinone oxidoreductase (complex I, CI), resulting in different assemblies (supercomplexes SCI(1)III(2) and SCI(2)III(4)). It depends on heme b as a cofactor.

It is found in the mitochondrion inner membrane. Functionally, component of the ubiquinol-cytochrome c oxidoreductase, a multisubunit transmembrane complex that is part of the mitochondrial electron transport chain which drives oxidative phosphorylation. The respiratory chain contains 3 multisubunit complexes succinate dehydrogenase (complex II, CII), ubiquinol-cytochrome c oxidoreductase (cytochrome b-c1 complex, complex III, CIII) and cytochrome c oxidase (complex IV, CIV), that cooperate to transfer electrons derived from NADH and succinate to molecular oxygen, creating an electrochemical gradient over the inner membrane that drives transmembrane transport and the ATP synthase. The cytochrome b-c1 complex catalyzes electron transfer from ubiquinol to cytochrome c, linking this redox reaction to translocation of protons across the mitochondrial inner membrane, with protons being carried across the membrane as hydrogens on the quinol. In the process called Q cycle, 2 protons are consumed from the matrix, 4 protons are released into the intermembrane space and 2 electrons are passed to cytochrome c. Cytochrome b is a catalytic core subunit containing 2 b-type hemes BL and BH topographically segregated in the quinone reduction (Qi) and quinol oxidation (Q0) sites on opposite sides of the membrane. The sequence is that of Cytochrome b (MT-CYB) from Arabidopsis thaliana (Mouse-ear cress).